We begin with the raw amino-acid sequence, 468 residues long: Microtubule-associated tyrosine carboxypeptidase 1 (468 aa).

Residues 1–10 (MVLDSGTQVY) show a composition bias toward polar residues. 2 disordered regions span residues 1-39 (MVLDSGTQVYEQAPPSPPASSPSQHHKLKPSNRNGPPLY) and 77-112 (MKRSESTYSVNSTGRRGRGKAPLGRGCDPGGGTLRP). Position 277 (histidine 277) interacts with Zn(2+). The active-site Nucleophile is the glutamate 278. Zn(2+)-binding residues include histidine 282 and glutamate 313.

Belongs to the peptidase MATCAP family. It depends on Zn(2+) as a cofactor.

Its subcellular location is the cytoplasm. The protein resides in the cytoskeleton. It carries out the reaction C-terminal L-alpha-aminoacyl-L-glutamyl-L-glutamyl-L-tyrosyl-[tubulin] + H2O = C-terminal L-alpha-aminoacyl-L-glutamyl-L-glutamyl-[tubulin] + L-tyrosine. It catalyses the reaction C-terminal L-alpha-aminoacyl-L-glutamyl-L-glutamyl-L-phenylalanyl-[tubulin] + H2O = C-terminal L-alpha-aminoacyl-L-glutamyl-L-glutamyl-[tubulin] + L-phenylalanine. In terms of biological role, tyrosine carboxypeptidase that removes the C-terminal tyrosine residue of alpha-tubulin, thereby regulating microtubule dynamics and function. Also able to remove the C-terminal phenylalanine residue of alpha-tubulin TUBA8. Recognizes adjacent tubulin dimers along the same protofilament. This is Microtubule-associated tyrosine carboxypeptidase 1 from Rattus norvegicus (Rat).